The sequence spans 953 residues: MTSATSPIILKWDPKSLEIRTLTVERLLEPLVTQVTTLVNTSNKGPSGKKKGRSKKAHVLAASVEQATQNFLEKGEQIAKESQDLKEELVAAVEDVRKQGETMRIASSEFADDPCSSVKRGTMVRAARALLSAVTRLLILADMADVMRLLSHLKIVEEALEAVKNATNEQDLANRFKEFGKEMVKLNYVAARRQQELKDPHCRDEMAAARGALKKNATMLYTASQAFLRHPDVAATRANRDYVFKQVQEAIAGISNAAQATSPTDEAKGHTGIGELAAALNEFDNKIILDPMTFSEARFRPSLEERLESIISGAALMADSSCTRDDRRERIVAECNAVRQALQDLLSEYMNNTGRKEKGDPLNIAIDKMTKKTRDLRRQLRKAVMDHISDSFLETNVPLLVLIEAAKSGNEKEVKEYAQVFREHANKLVEVANLACSISNNEEGVKLVRMAATQIDSLCPQVINAALTLAARPQSKVAQDNMDVFKDQWEKQVRVLTEAVDDITSVDDFLSVSENHILEDVNKCVIALQEGDVDTLDRTAGAIRGRAARVIHIINAEMENYEAGVYTEKVLEATKLLSETVMPRFAEQVEVAIEALSANVPQPFEENEFIDASRLVYDGVRDIRKAVLMIRTPEELEDDSDFEQEDYDVRSRTSVQTEDDQLIAGQSARAIMAQLPQEEKAKIAEQVEIFHQEKSKLDAEVAKWDDSGNDIIVLAKQMCMIMMEMTDFTRGKGPLKNTSDVINAAKKIAEAGSRMDKLARAVADQCPDSACKQDLLAYLQRIALYCHQLNICSKVKAEVQNLGGELIVSGTGVQSTFTTFYEVDCDVIDGGRASQLSTHLPTCAEGAPIGSGSSDSSMLDSATSLIQAAKNLMNAVVLTVKASYVASTKYQKVYGTAAVNSPVVSWKMKAPEKKPLVKREKPEEFQTRVRRGSQKKHISPVQALSEFKAMDSF.

Threonine 632 is subject to Phosphothreonine. Phosphoserine is present on residues serine 640, serine 651, and serine 901. A compositionally biased stretch (basic and acidic residues) spans 912 to 927; sequence EKKPLVKREKPEEFQT. Positions 912 to 939 are disordered; it reads EKKPLVKREKPEEFQTRVRRGSQKKHIS. The span at 928-938 shows a compositional bias: basic residues; the sequence is RVRRGSQKKHI. The residue at position 939 (serine 939) is a Phosphoserine.

It belongs to the vinculin/alpha-catenin family. Interacts with CDH1 and CDH2. Interacts with ZNF639; recruits CTNNA2 to the nucleus. Interacts with F-actin. Expressed in neural tissues, with strongest expression in fetal and adult brain. Expressed in the developing cortical plate and marginal zone of 20-week-old human fetal brain.

It is found in the cell membrane. Its subcellular location is the cytoplasm. It localises to the cytoskeleton. The protein localises to the cell junction. The protein resides in the adherens junction. It is found in the cell projection. Its subcellular location is the axon. It localises to the nucleus. Functionally, may function as a linker between cadherin adhesion receptors and the cytoskeleton to regulate cell-cell adhesion and differentiation in the nervous system. Required for proper regulation of cortical neuronal migration and neurite growth. It acts as a negative regulator of Arp2/3 complex activity and Arp2/3-mediated actin polymerization. It thereby suppresses excessive actin branching which would impair neurite growth and stability. Regulates morphological plasticity of synapses and cerebellar and hippocampal lamination during development. Functions in the control of startle modulation. The polypeptide is Catenin alpha-2 (CTNNA2) (Homo sapiens (Human)).